A 225-amino-acid chain; its full sequence is PKHD-type hydroxylase YbiX (225 aa).

The Fe2OG dioxygenase domain maps to 78 to 177 (TLSTPLFNRY…RVASFMWIQS (100 aa)). Residues His-96, Asp-98, and His-158 each contribute to the Fe cation site. Arg-168 lines the 2-oxoglutarate pocket.

It depends on Fe(2+) as a cofactor. Requires L-ascorbate as cofactor.

The polypeptide is PKHD-type hydroxylase YbiX (Shigella boydii serotype 4 (strain Sb227)).